A 144-amino-acid chain; its full sequence is Large ribosomal subunit protein uL13 (144 aa).

It belongs to the universal ribosomal protein uL13 family. As to quaternary structure, part of the 50S ribosomal subunit.

In terms of biological role, this protein is one of the early assembly proteins of the 50S ribosomal subunit, although it is not seen to bind rRNA by itself. It is important during the early stages of 50S assembly. The chain is Large ribosomal subunit protein uL13 from Clostridium botulinum (strain Alaska E43 / Type E3).